A 251-amino-acid polypeptide reads, in one-letter code: 5'-nucleotidase SurE (251 aa).

The a divalent metal cation site is built by Asp8, Asp9, Ser39, and Asn90.

The protein belongs to the SurE nucleotidase family. Requires a divalent metal cation as cofactor.

It localises to the cytoplasm. It carries out the reaction a ribonucleoside 5'-phosphate + H2O = a ribonucleoside + phosphate. Nucleotidase that shows phosphatase activity on nucleoside 5'-monophosphates. The protein is 5'-nucleotidase SurE of Colwellia psychrerythraea (strain 34H / ATCC BAA-681) (Vibrio psychroerythus).